Reading from the N-terminus, the 301-residue chain is Rhodopsin (301 aa).

At 1 to 18 (LHMIHLHWYQYPPMNPMM) the chain is on the extracellular side. Residues 19 to 43 (YPLLLIFMLFTGILCLAGNFVTIWV) form a helical membrane-spanning segment. At 44–55 (FMNTKSLRTPAN) the chain is on the cytoplasmic side. Residues 56 to 78 (LLVVNLAMSDFLMMFTMFPPMMV) traverse the membrane as a helical segment. Residues 79 to 92 (TCYYHTWTLGPTFC) are Extracellular-facing. Cysteine 92 and cysteine 169 are oxidised to a cystine. The helical transmembrane segment at 93 to 115 (QVYAFLGNLCGCASIWTMVFITF) threads the bilayer. Residues 116–118 (DRY) carry the 'Ionic lock' involved in activated form stabilization motif. The Cytoplasmic portion of the chain corresponds to 116-134 (DRYNVIVKGVAGEPLSNKK). The chain crosses the membrane as a helical span at residues 135–155 (AAMWILSVWVLSTAWCMAPFF). Over 156-182 (GWNSYVPEGNLTGCGTDYLSEDILSRS) the chain is Extracellular. Asparagine 165 carries an N-linked (GlcNAc...) asparagine glycan. A helical membrane pass occupies residues 183–204 (YLYIYSTWVYFLPLTITIYCYV). Over 205-245 (FIIKAVAAHEKGMRDQAKKMGIKSLRNEEAQKTSAECRLAK) the chain is Cytoplasmic. Residues 246-267 (IAMTTVALWFIAWTPYLLINWV) form a helical membrane-spanning segment. The Extracellular segment spans residues 268 to 278 (GMFARSYLSPV). The helical transmembrane segment at 279–300 (YTIWGYVFAKANAVYNPIVYAI) threads the bilayer. Residue lysine 288 is modified to N6-(retinylidene)lysine.

This sequence belongs to the G-protein coupled receptor 1 family. Opsin subfamily. Homodimer. Interacts with GNAQ. In terms of processing, contains one covalently linked retinal chromophore.

It is found in the cell projection. The protein resides in the rhabdomere membrane. In terms of biological role, photoreceptor required for image-forming vision at low light intensity. Can use both retinal and 3-dehydroretinal as visual pigment. Light-induced isomerization of 11-cis to all-trans retinal triggers a conformational change that activates signaling via G-proteins. Signaling via GNAQ probably mediates the activation of phospholipase C. The protein is Rhodopsin (RHO) of Faxonius virilis (Virile crayfish).